The following is a 914-amino-acid chain: Alanine--tRNA ligase (914 aa).

Residues H613, H617, C717, and H721 each contribute to the Zn(2+) site.

This sequence belongs to the class-II aminoacyl-tRNA synthetase family. It depends on Zn(2+) as a cofactor.

The protein localises to the cytoplasm. It catalyses the reaction tRNA(Ala) + L-alanine + ATP = L-alanyl-tRNA(Ala) + AMP + diphosphate. In terms of biological role, catalyzes the attachment of alanine to tRNA(Ala) in a two-step reaction: alanine is first activated by ATP to form Ala-AMP and then transferred to the acceptor end of tRNA(Ala). Also edits incorrectly charged Ser-tRNA(Ala) and Gly-tRNA(Ala) via its editing domain. The polypeptide is Alanine--tRNA ligase (Pyrococcus abyssi (strain GE5 / Orsay)).